We begin with the raw amino-acid sequence, 177 residues long: Putative pre-16S rRNA nuclease (177 aa).

The protein belongs to the YqgF nuclease family.

The protein localises to the cytoplasm. Could be a nuclease involved in processing of the 5'-end of pre-16S rRNA. This Psychrobacter arcticus (strain DSM 17307 / VKM B-2377 / 273-4) protein is Putative pre-16S rRNA nuclease.